Here is a 201-residue protein sequence, read N- to C-terminus: 3-isopropylmalate dehydratase small subunit (201 aa).

It belongs to the LeuD family. LeuD type 1 subfamily. As to quaternary structure, heterodimer of LeuC and LeuD.

The enzyme catalyses (2R,3S)-3-isopropylmalate = (2S)-2-isopropylmalate. It participates in amino-acid biosynthesis; L-leucine biosynthesis; L-leucine from 3-methyl-2-oxobutanoate: step 2/4. Its function is as follows. Catalyzes the isomerization between 2-isopropylmalate and 3-isopropylmalate, via the formation of 2-isopropylmaleate. In Rhodopseudomonas palustris (strain HaA2), this protein is 3-isopropylmalate dehydratase small subunit.